A 254-amino-acid chain; its full sequence is NH(3)-dependent NAD(+) synthetase (254 aa).

Position 32-39 (32-39) interacts with ATP; the sequence is GISGGVDS. D38 is a binding site for Mg(2+). R113 contributes to the deamido-NAD(+) binding site. T133 lines the ATP pocket. Position 138 (E138) interacts with Mg(2+). Deamido-NAD(+)-binding residues include K146 and D153. The ATP site is built by K162 and S184. 244–245 serves as a coordination point for deamido-NAD(+); the sequence is HK.

The protein belongs to the NAD synthetase family. In terms of assembly, homodimer.

It catalyses the reaction deamido-NAD(+) + NH4(+) + ATP = AMP + diphosphate + NAD(+) + H(+). The protein operates within cofactor biosynthesis; NAD(+) biosynthesis; NAD(+) from deamido-NAD(+) (ammonia route): step 1/1. Functionally, catalyzes the ATP-dependent amidation of deamido-NAD to form NAD. Uses ammonia as a nitrogen source. In Thermococcus sibiricus (strain DSM 12597 / MM 739), this protein is NH(3)-dependent NAD(+) synthetase.